The primary structure comprises 465 residues: Iron-sulfur cluster assembly SufBD family protein SAR0880 (465 aa).

It belongs to the iron-sulfur cluster assembly SufBD family.

In Staphylococcus aureus (strain MRSA252), this protein is Iron-sulfur cluster assembly SufBD family protein SAR0880.